Reading from the N-terminus, the 150-residue chain is Azurin (150 aa).

The first 21 residues, 1 to 21, serve as a signal peptide directing secretion; that stretch reads MFKQVLGGMALMAAFSAPVLA. The Plastocyanin-like domain occupies 22–150; it reads AECSVDIAGT…LMKGTLKLVD (129 aa). A disulfide bridge connects residues cysteine 24 and cysteine 47. Cu cation-binding residues include histidine 67, cysteine 133, histidine 138, and methionine 142.

It is found in the periplasm. This is Azurin from Bordetella bronchiseptica (strain ATCC BAA-588 / NCTC 13252 / RB50) (Alcaligenes bronchisepticus).